Reading from the N-terminus, the 547-residue chain is RNA polymerase sigma factor sigF, chloroplastic (547 aa).

Residues 1–17 are compositionally biased toward polar residues; that stretch reads MEATRNLVSSSPSFQTK. Disordered regions lie at residues 1-28 and 54-79; these read MEAT…SSPS and FPAS…DDRT. The transit peptide at 1 to 55 directs the protein to the chloroplast; that stretch reads MEATRNLVSSSPSFQTKTHLKSSYSSPSSVVMLHDQTTTPVVNSRHLNSLSRHFP. Residues 62–79 are compositionally biased toward basic and acidic residues; the sequence is EPREESRPLSHALRDDRT. Phosphoserine; by CK2 occurs at positions 94, 95, 174, 176, 177, and 180. A disordered region spans residues 163 to 226; sequence ANPSDNIKDS…QKTSAKKKYK (64 aa). Residues 172–181 are compositionally biased toward low complexity; the sequence is SLSTSSSMSL. Residue Thr249 is modified to Phosphothreonine; by CK2. The short motif at 335–348 is the Polymerase core binding element; sequence DLLQEGSMGLMKSV. The segment at residues 505 to 524 is a DNA-binding region (H-T-H motif); the sequence is LSEIGEIYGLSKERVRQLES.

It belongs to the sigma-70 factor family. As to quaternary structure, interacts (via N-terminus) with DG1 (via C-terminus). In terms of processing, phosphorylated to acquire sigma activity; site-specific phosphorylation regulates promoter affinity. Phosphorylation at Ser-174 by chloroplastic CK2 requires prior phosphorylation at Ser-177. Phosphorylation at either Ser-94, Ser-95 or Ser-174 is required for sigma activation. In terms of tissue distribution, expressed in seedling, accumulating progressively. Present in leaves but not in roots.

The protein resides in the plastid. Its subcellular location is the chloroplast. Functionally, sigma factors are initiation factors that promote the attachment of plastid-encoded RNA polymerase (PEP) to specific initiation sites and are then released. Regulates transcription in chloroplast in a DG1-dependent manner. Involved in light-dependent chloroplast development. Required during early plant development and primary leaf formation. The polypeptide is RNA polymerase sigma factor sigF, chloroplastic (SIGF) (Arabidopsis thaliana (Mouse-ear cress)).